Consider the following 356-residue polypeptide: Peptide chain release factor 1 (356 aa).

At Q233 the chain carries N5-methylglutamine.

The protein belongs to the prokaryotic/mitochondrial release factor family. In terms of processing, methylated by PrmC. Methylation increases the termination efficiency of RF1.

The protein resides in the cytoplasm. In terms of biological role, peptide chain release factor 1 directs the termination of translation in response to the peptide chain termination codons UAG and UAA. The polypeptide is Peptide chain release factor 1 (Oceanobacillus iheyensis (strain DSM 14371 / CIP 107618 / JCM 11309 / KCTC 3954 / HTE831)).